The primary structure comprises 138 residues: Small ribosomal subunit protein uS11c (138 aa).

The disordered stretch occupies residues 1-23 (MAKPIPRIGSRRNGRISSRKSTR). The segment covering 9–23 (GSRRNGRISSRKSTR) has biased composition (basic residues).

It belongs to the universal ribosomal protein uS11 family. Part of the 30S ribosomal subunit.

The protein resides in the plastid. It localises to the chloroplast. This chain is Small ribosomal subunit protein uS11c, found in Cucumis sativus (Cucumber).